The chain runs to 412 residues: MIARCKGCSDLLPEDMLRFRYIESIFHDSCITWGYEEVRTPMLEYLSLFTSSGTLTPQMLKRVYSFLDWDGWSGERVVLRPDGTIPAARLYIDSLQEMDVARLCYTSSIFRFDETGKKSRENWQLGAELIGVTSPEANAELITLALETLARLGFEDVELRLSHAQLIKAVLAQLEPNADEQHKIFDQLLDGDIALMSRLETEKPELFRTLKLLMENKGTSASFLKNVMAMAGTAGGELEEPLNDFIAGVDVLDKLGVSYQIDLASGKGFEYYTGVIFHLFVNGEHVGGGGRYDKLIPLLGGPDKPAAGFALYLNRLIPMIDAEDMYDMVEEKILIKYQGDNLKNAYEIANLIRECGISAELFYPGVDTAAYGWAVTVKAEDCYEVTDLIEDKTLELKEQSEVIYLLNGEEDA.

Belongs to the class-II aminoacyl-tRNA synthetase family. HisZ subfamily. In terms of assembly, heteromultimer composed of HisG and HisZ subunits.

It is found in the cytoplasm. The protein operates within amino-acid biosynthesis; L-histidine biosynthesis; L-histidine from 5-phospho-alpha-D-ribose 1-diphosphate: step 1/9. In terms of biological role, required for the first step of histidine biosynthesis. May allow the feedback regulation of ATP phosphoribosyltransferase activity by histidine. The chain is ATP phosphoribosyltransferase regulatory subunit from Dehalococcoides mccartyi (strain CBDB1).